The following is a 1458-amino-acid chain: DNA polymerase alpha catalytic subunit (1458 aa).

Disordered stretches follow at residues 1–25 (MSDSGSFAASRSRREKTEKSGRKEA) and 89–119 (DLEDNALADSGKGAKGAPKDKTNVKKSSVSK). Basic and acidic residues predominate over residues 15-25 (EKTEKSGRKEA). DNA-binding regions lie at residues 650–715 (RINS…VHQI) and 1241–1373 (QFRA…ACSK). Zn(2+)-binding residues include Cys-1280, Cys-1283, Cys-1307, Cys-1312, Cys-1345, Cys-1350, Cys-1368, and Cys-1371. The segment at 1280–1310 (CPKCGTENIYDNVFDGSGLQIEPGLKRCSKP) adopts a CysA-type zinc-finger fold. The short motif at 1345–1371 (CEEKTCQNRTRRLPLSFSRNGPICQAC) is the CysB motif element.

It belongs to the DNA polymerase type-B family. In terms of assembly, the DNA polymerase alpha complex is composed of four subunits: the catalytic subunit POLA1, the regulatory subunit POLA2, and the small and the large primase subunits PRIM1 and PRIM2 respectively. Interacts with PARP1; this interaction functions as part of the control of replication fork progression. Interacts with MCM10 and WDHD1; these interactions recruit the polymerase alpha complex to the pre-replicative complex bound to DNA. Interacts with RPA1; this interaction stabilizes the replicative complex and reduces the misincorporation rate of DNA polymerase alpha by acting as a fidelity clamp.

Its subcellular location is the nucleus. The catalysed reaction is DNA(n) + a 2'-deoxyribonucleoside 5'-triphosphate = DNA(n+1) + diphosphate. Its function is as follows. Plays an essential role in the initiation of DNA replication. During the S phase of the cell cycle, the DNA polymerase alpha complex (composed of a catalytic subunit POLA1/p180, a regulatory subunit POLA2/p70 and two primase subunits PRIM1/p49 and PRIM2/p58) is recruited to DNA at the replicative forks via direct interactions with MCM10 and WDHD1. The primase subunit of the polymerase alpha complex initiates DNA synthesis by oligomerising short RNA primers on both leading and lagging strands. These primers are initially extended by the polymerase alpha catalytic subunit and subsequently transferred to polymerase delta and polymerase epsilon for processive synthesis on the lagging and leading strand, respectively. The reason this transfer occurs is because the polymerase alpha has limited processivity and lacks intrinsic 3' exonuclease activity for proofreading error, and therefore is not well suited for replicating long complexes. The chain is DNA polymerase alpha catalytic subunit (pola1) from Xenopus laevis (African clawed frog).